The sequence spans 231 residues: Phosphoribosylformylglycinamidine synthase subunit PurQ (231 aa).

The Glutamine amidotransferase type-1 domain maps to 7–231 (GVVVFPGSNC…RLFASLFRQL (225 aa)). The Nucleophile role is filled by C89. Active-site residues include H206 and E208.

In terms of assembly, part of the FGAM synthase complex composed of 1 PurL, 1 PurQ and 2 PurS subunits.

It is found in the cytoplasm. It carries out the reaction N(2)-formyl-N(1)-(5-phospho-beta-D-ribosyl)glycinamide + L-glutamine + ATP + H2O = 2-formamido-N(1)-(5-O-phospho-beta-D-ribosyl)acetamidine + L-glutamate + ADP + phosphate + H(+). The catalysed reaction is L-glutamine + H2O = L-glutamate + NH4(+). The protein operates within purine metabolism; IMP biosynthesis via de novo pathway; 5-amino-1-(5-phospho-D-ribosyl)imidazole from N(2)-formyl-N(1)-(5-phospho-D-ribosyl)glycinamide: step 1/2. In terms of biological role, part of the phosphoribosylformylglycinamidine synthase complex involved in the purines biosynthetic pathway. Catalyzes the ATP-dependent conversion of formylglycinamide ribonucleotide (FGAR) and glutamine to yield formylglycinamidine ribonucleotide (FGAM) and glutamate. The FGAM synthase complex is composed of three subunits. PurQ produces an ammonia molecule by converting glutamine to glutamate. PurL transfers the ammonia molecule to FGAR to form FGAM in an ATP-dependent manner. PurS interacts with PurQ and PurL and is thought to assist in the transfer of the ammonia molecule from PurQ to PurL. The protein is Phosphoribosylformylglycinamidine synthase subunit PurQ of Chlorobium luteolum (strain DSM 273 / BCRC 81028 / 2530) (Pelodictyon luteolum).